A 145-amino-acid chain; its full sequence is Transcriptional regulator ZitR (145 aa).

Residues 1-142 (MSLANQIDQF…ISQFLSVLTE (142 aa)) enclose the HTH marR-type domain. Zn(2+)-binding residues include Glu-23, Cys-29, Glu-40, and His-41. Residues 53-76 (NARIAEQLKISPAAVTKALKKLQE) constitute a DNA-binding region (H-T-H motif). Glu-106, His-107, and His-111 together coordinate Zn(2+).

Homodimer.

Zinc acts as a corepressor and is required for DNA-binding activity. Binds up to two zinc ligands per monomer. Inactive under zinc deprivation. Functionally, zinc-responsive regulator that represses expression of the zit operon in the presence of zinc. Acts by binding two palindromic operator sites overlapping the -35 and -10 boxes of the zit promoter. Could be a sensitive sensor of intracellular zinc to efficiently respond to zinc variations in the environment. This chain is Transcriptional regulator ZitR (zitR), found in Lactococcus lactis subsp. cremoris (strain MG1363).